We begin with the raw amino-acid sequence, 612 residues long: uncharacterized protein (612 aa).

The protein resides in the plastid. It localises to the chloroplast. This is an uncharacterized protein from Pyropia yezoensis (Susabi-nori).